A 179-amino-acid polypeptide reads, in one-letter code: ATP synthase subunit b, chloroplastic (179 aa).

A helical transmembrane segment spans residues 35-51 (IVILGGGIFKLGSTALS).

This sequence belongs to the ATPase B chain family. As to quaternary structure, F-type ATPases have 2 components, F(1) - the catalytic core - and F(0) - the membrane proton channel. F(1) has five subunits: alpha(3), beta(3), gamma(1), delta(1), epsilon(1). F(0) has four main subunits: a(1), b(1), b'(1) and c(10-14). The alpha and beta chains form an alternating ring which encloses part of the gamma chain. F(1) is attached to F(0) by a central stalk formed by the gamma and epsilon chains, while a peripheral stalk is formed by the delta, b and b' chains.

It localises to the plastid. Its subcellular location is the chloroplast thylakoid membrane. Functionally, f(1)F(0) ATP synthase produces ATP from ADP in the presence of a proton or sodium gradient. F-type ATPases consist of two structural domains, F(1) containing the extramembraneous catalytic core and F(0) containing the membrane proton channel, linked together by a central stalk and a peripheral stalk. During catalysis, ATP synthesis in the catalytic domain of F(1) is coupled via a rotary mechanism of the central stalk subunits to proton translocation. Component of the F(0) channel, it forms part of the peripheral stalk, linking F(1) to F(0). In Emiliania huxleyi (Coccolithophore), this protein is ATP synthase subunit b, chloroplastic.